Reading from the N-terminus, the 108-residue chain is Large ribosomal subunit protein eL30 (108 aa).

It belongs to the eukaryotic ribosomal protein eL30 family.

This Saccharolobus solfataricus (strain ATCC 35092 / DSM 1617 / JCM 11322 / P2) (Sulfolobus solfataricus) protein is Large ribosomal subunit protein eL30 (rpl30e).